The primary structure comprises 321 residues: Olfactory receptor 56B34 (321 aa).

Topologically, residues M1–P36 are extracellular. A helical membrane pass occupies residues M37–L57. Residues E58–G70 lie on the Cytoplasmic side of the membrane. Residues I71 to L91 traverse the membrane as a helical segment. Residues W92–A105 are Extracellular-facing. Cysteines 103 and 185 form a disulfide. Residues Q106 to I126 form a helical membrane-spanning segment. The Cytoplasmic segment spans residues D127 to R128. A helical membrane pass occupies residues Y129–K149. Topologically, residues A150–A207 are extracellular. Residues L208 to I228 traverse the membrane as a helical segment. At R229–H250 the chain is on the cytoplasmic side. A helical membrane pass occupies residues L251–G271. Topologically, residues R272–P275 are extracellular. A helical membrane pass occupies residues L276 to V296. The Cytoplasmic segment spans residues Y297–K321.

It belongs to the G-protein coupled receptor 1 family.

The protein resides in the cell membrane. Its function is as follows. Odorant receptor. The polypeptide is Olfactory receptor 56B34 (Mus musculus (Mouse)).